Consider the following 364-residue polypeptide: Aminomethyltransferase (364 aa).

This sequence belongs to the GcvT family. In terms of assembly, the glycine cleavage system is composed of four proteins: P, T, L and H.

It catalyses the reaction N(6)-[(R)-S(8)-aminomethyldihydrolipoyl]-L-lysyl-[protein] + (6S)-5,6,7,8-tetrahydrofolate = N(6)-[(R)-dihydrolipoyl]-L-lysyl-[protein] + (6R)-5,10-methylene-5,6,7,8-tetrahydrofolate + NH4(+). Its function is as follows. The glycine cleavage system catalyzes the degradation of glycine. The protein is Aminomethyltransferase of Escherichia coli O17:K52:H18 (strain UMN026 / ExPEC).